Reading from the N-terminus, the 199-residue chain is Chaperone protein TorD (199 aa).

Belongs to the TorD/DmsD family. TorD subfamily.

It is found in the cytoplasm. Involved in the biogenesis of TorA. Acts on TorA before the insertion of the molybdenum cofactor and, as a result, probably favors a conformation of the apoenzyme that is competent for acquiring the cofactor. The chain is Chaperone protein TorD from Escherichia coli O127:H6 (strain E2348/69 / EPEC).